We begin with the raw amino-acid sequence, 240 residues long: Ribosomal RNA small subunit methyltransferase G (240 aa).

S-adenosyl-L-methionine-binding positions include Gly80, Phe85, 103–105 (DSS), 131–132 (AE), and Arg150.

This sequence belongs to the methyltransferase superfamily. RNA methyltransferase RsmG family.

Its subcellular location is the cytoplasm. Its function is as follows. Specifically methylates the N7 position of a guanine in 16S rRNA. This chain is Ribosomal RNA small subunit methyltransferase G, found in Thermoanaerobacter sp. (strain X514).